The following is a 1181-amino-acid chain: Clustered mitochondria protein homolog (1181 aa).

Positions 165–195 (AKAEALAKNEEVSEDEESEPEDDTPMKQSTQ) are disordered. Residues 176 to 187 (VSEDEESEPEDD) are compositionally biased toward acidic residues. In terms of domain architecture, Clu spans 379–622 (DMARNQELLS…RLAPVDIAFL (244 aa)). Residues 1130-1181 (GRLARQAPKPTATHQKEAPKKASKKTKGKGKGKDDKGEKLVAELKKKKAGKR) are disordered. A compositionally biased stretch (basic residues) spans 1150–1159 (KASKKTKGKG). The span at 1160-1173 (KGKDDKGEKLVAEL) shows a compositional bias: basic and acidic residues.

The protein belongs to the CLU family. In terms of assembly, may associate with the eukaryotic translation initiation factor 3 (eIF-3) complex.

It localises to the cytoplasm. Functionally, mRNA-binding protein involved in proper cytoplasmic distribution of mitochondria. The protein is Clustered mitochondria protein homolog of Yarrowia lipolytica (strain CLIB 122 / E 150) (Yeast).